Consider the following 460-residue polypeptide: tRNA modification GTPase MnmE (460 aa).

(6S)-5-formyl-5,6,7,8-tetrahydrofolate-binding residues include Arg-26, Glu-88, and Arg-127. The TrmE-type G domain occupies 222-381 (GLKVAIVGRP…LESAILSKVQ (160 aa)). A K(+)-binding site is contributed by Asn-232. Residues 232–237 (NVGKSS), 251–257 (TELPGTT), and 276–279 (DTAG) each bind GTP. Ser-236 contributes to the Mg(2+) binding site. The K(+) site is built by Thr-251, Leu-253, and Thr-256. Thr-257 contacts Mg(2+). Lys-460 serves as a coordination point for (6S)-5-formyl-5,6,7,8-tetrahydrofolate.

Belongs to the TRAFAC class TrmE-Era-EngA-EngB-Septin-like GTPase superfamily. TrmE GTPase family. Homodimer. Heterotetramer of two MnmE and two MnmG subunits. K(+) serves as cofactor.

The protein resides in the cytoplasm. Its function is as follows. Exhibits a very high intrinsic GTPase hydrolysis rate. Involved in the addition of a carboxymethylaminomethyl (cmnm) group at the wobble position (U34) of certain tRNAs, forming tRNA-cmnm(5)s(2)U34. This is tRNA modification GTPase MnmE from Cyanothece sp. (strain PCC 7425 / ATCC 29141).